A 152-amino-acid chain; its full sequence is Deoxyuridine 5'-triphosphate nucleotidohydrolase (152 aa).

Residues 71 to 73 (RSG), asparagine 84, 88 to 90 (LID), and methionine 98 each bind substrate.

Belongs to the dUTPase family. Mg(2+) is required as a cofactor.

It catalyses the reaction dUTP + H2O = dUMP + diphosphate + H(+). It functions in the pathway pyrimidine metabolism; dUMP biosynthesis; dUMP from dCTP (dUTP route): step 2/2. Its function is as follows. This enzyme is involved in nucleotide metabolism: it produces dUMP, the immediate precursor of thymidine nucleotides and it decreases the intracellular concentration of dUTP so that uracil cannot be incorporated into DNA. In Haemophilus ducreyi (strain 35000HP / ATCC 700724), this protein is Deoxyuridine 5'-triphosphate nucleotidohydrolase.